The following is a 433-amino-acid chain: G-protein coupled receptor 22 (433 aa).

Topologically, residues 1–45 (MCFSPILEINMQSESNITVRDDIDDINTNMYQPLSYPLSFQVSLT) are extracellular. N-linked (GlcNAc...) asparagine glycosylation occurs at Asn-16. The helical transmembrane segment at 46–66 (GFLMLEIVLGLGSNLTVLVLY) threads the bilayer. The Cytoplasmic segment spans residues 67-85 (CMKSNLINSVSNIITMNLH). A helical transmembrane segment spans residues 86 to 106 (VLDVIICVGCIPLTIVILLLS). At 107–115 (LESNTALIC) the chain is on the extracellular side. The helical transmembrane segment at 116–136 (CFHEACVSFASVSTAINVFAI) threads the bilayer. The Cytoplasmic segment spans residues 137–156 (TLDRYDISVKPANRILTMGR). A helical membrane pass occupies residues 157–177 (AVMLMISIWIFSFFSFLIPFI). The Extracellular portion of the chain corresponds to 178–208 (EVNFFSLQSGNTWENKTLLCVSTNEYYTELG). An N-linked (GlcNAc...) asparagine glycan is attached at Asn-192. Residues 209–229 (MYYHLLVQIPIFFFTVVVMLI) form a helical membrane-spanning segment. At 230 to 315 (TYTKILQALN…ERQKRVFRMS (86 aa)) the chain is on the cytoplasmic side. Residues 316 to 336 (LLIISTFLLCWTPISVLNTTI) form a helical membrane-spanning segment. Residues 337–349 (LCLGPSDLLVKLR) lie on the Extracellular side of the membrane. Residues 350 to 370 (LCFLVMAYGTTIFHPLLYAFT) form a helical membrane-spanning segment. The Cytoplasmic portion of the chain corresponds to 371-433 (RQKFQKVLKS…KCLVPQVVTD (63 aa)).

It belongs to the G-protein coupled receptor 1 family. High expression in adult and fetal heart tissue. Expressed in the brain, with enrichment in the accumbens, amygdala, cerebellum, cortex, and hippocampus regions.

The protein resides in the cell membrane. Functionally, orphan G-protein coupled receptor. Seems to act through a G(i)/G(o) mediated pathway. May be involved in ciliogenesis. This chain is G-protein coupled receptor 22, found in Homo sapiens (Human).